The following is a 391-amino-acid chain: S-adenosylmethionine synthase (391 aa).

H14 is a binding site for ATP. Residue D16 coordinates Mg(2+). Residue E42 coordinates K(+). Positions 55 and 98 each coordinate L-methionine. The tract at residues Q98 to E108 is flexible loop. Residues D172–K174, R238–F239, D247, R253–K254, A270, and K274 contribute to the ATP site. Position 247 (D247) interacts with L-methionine. Position 278 (K278) interacts with L-methionine.

The protein belongs to the AdoMet synthase family. As to quaternary structure, homotetramer; dimer of dimers. The cofactor is Mg(2+). K(+) serves as cofactor.

The protein localises to the cytoplasm. It carries out the reaction L-methionine + ATP + H2O = S-adenosyl-L-methionine + phosphate + diphosphate. It participates in amino-acid biosynthesis; S-adenosyl-L-methionine biosynthesis; S-adenosyl-L-methionine from L-methionine: step 1/1. Its function is as follows. Catalyzes the formation of S-adenosylmethionine (AdoMet) from methionine and ATP. The overall synthetic reaction is composed of two sequential steps, AdoMet formation and the subsequent tripolyphosphate hydrolysis which occurs prior to release of AdoMet from the enzyme. The sequence is that of S-adenosylmethionine synthase from Clostridium botulinum (strain Alaska E43 / Type E3).